Consider the following 156-residue polypeptide: Peptidyl-prolyl cis-trans isomerase cypE (156 aa).

The PPIase cyclophilin-type domain occupies 2 to 155; that stretch reads TEQTVTLQTT…DEIRIIKATA (154 aa).

It belongs to the cyclophilin-type PPIase family. Interacts with snwA.

Its subcellular location is the cytoplasm. The protein localises to the nucleus. The enzyme catalyses [protein]-peptidylproline (omega=180) = [protein]-peptidylproline (omega=0). Functionally, catalyzes the cis-trans isomerization of proline imidic peptide bonds in oligopeptides. Plays a role in protein folding, transport and assembly. This Dictyostelium discoideum (Social amoeba) protein is Peptidyl-prolyl cis-trans isomerase cypE (cypE).